We begin with the raw amino-acid sequence, 412 residues long: MKTTTYSLLALAAASKLASAHTTVQAVWINGEDQGLGNSADGYIRSPPSNSPVTDVTSTDMTCNVNGDQAASKTLSVKAGDVVTFEWHHSDRSDSDDIIASSHKGPVQVYMAPTAKGSNGNNWVKIAEDGYHKSSDEWATDILIANKGKHNITVPDVPAGNYLFRPEIIALHEGNREGGAQFYMECVQFKVTSDGSSELPSGVSIPGVYTATDPGILFDIYNSFDSYPIPGPDVWDGSSSGSSSGSSSAAAAATTSAAVAATTPATQAAVEVSSSAAAVVESTSSAAAATTEAAAPVVSSAAPVQQATSAVTSQAQAPTTFATSSKSSKTACKNKTKSKSKVAASSTEAVVAPAPTSSVVPAVSASASASAGGVAKMYERCGGINHTGPTTCESGSVCKKWNPYYYQCVASQ.

The N-terminal stretch at Met1–Ala20 is a signal peptide. Positions 21 and 103 each coordinate Cu(2+). Residues Cys63 and Cys186 are joined by a disulfide bond. Asn151 carries N-linked (GlcNAc...) asparagine glycosylation. Position 172 (His172) interacts with O2. Tyr183 is a Cu(2+) binding site. N-linked (GlcNAc...) asparagine glycosylation is found at Asn334 and Asn385. The CBM1 domain occupies Gly373 to Val409.

This sequence belongs to the polysaccharide monooxygenase AA9 family. Cu(2+) is required as a cofactor.

Its subcellular location is the secreted. The enzyme catalyses [(1-&gt;4)-beta-D-glucosyl]n+m + reduced acceptor + O2 = 4-dehydro-beta-D-glucosyl-[(1-&gt;4)-beta-D-glucosyl]n-1 + [(1-&gt;4)-beta-D-glucosyl]m + acceptor + H2O.. Lytic polysaccharide monooxygenase (LPMO) that depolymerizes crystalline and amorphous polysaccharides via the oxidation of scissile alpha- or beta-(1-4)-glycosidic bonds, yielding C4 oxidation products. Catalysis by LPMOs requires the reduction of the active-site copper from Cu(II) to Cu(I) by a reducing agent and H(2)O(2) or O(2) as a cosubstrate. This is AA9 family lytic polysaccharide monooxygenase A (eglD) from Aspergillus niger (strain ATCC MYA-4892 / CBS 513.88 / FGSC A1513).